Here is a 547-residue protein sequence, read N- to C-terminus: CTP synthase (547 aa).

An amidoligase domain region spans residues 1–265 (MARYIFITGG…DQAVLDAFQI (265 aa)). Serine 13 is a CTP binding site. Position 13 (serine 13) interacts with UTP. Residues 14–19 (SLGKGL) and aspartate 71 contribute to the ATP site. Mg(2+) is bound by residues aspartate 71 and glutamate 139. CTP contacts are provided by residues 146–148 (DIE), 186–191 (KTKPTQ), and lysine 222. Residues 186 to 191 (KTKPTQ) and lysine 222 each bind UTP. Residues 291–546 (RIAVVGKYTQ…IRAAMDNERL (256 aa)) enclose the Glutamine amidotransferase type-1 domain. Glycine 352 is a binding site for L-glutamine. Cysteine 379 serves as the catalytic Nucleophile; for glutamine hydrolysis. Residues 380 to 383 (LGMQ), glutamate 403, and arginine 474 contribute to the L-glutamine site. Residues histidine 519 and glutamate 521 contribute to the active site.

The protein belongs to the CTP synthase family. In terms of assembly, homotetramer.

It carries out the reaction UTP + L-glutamine + ATP + H2O = CTP + L-glutamate + ADP + phosphate + 2 H(+). The catalysed reaction is L-glutamine + H2O = L-glutamate + NH4(+). It catalyses the reaction UTP + NH4(+) + ATP = CTP + ADP + phosphate + 2 H(+). It functions in the pathway pyrimidine metabolism; CTP biosynthesis via de novo pathway; CTP from UDP: step 2/2. Allosterically activated by GTP, when glutamine is the substrate; GTP has no effect on the reaction when ammonia is the substrate. The allosteric effector GTP functions by stabilizing the protein conformation that binds the tetrahedral intermediate(s) formed during glutamine hydrolysis. Inhibited by the product CTP, via allosteric rather than competitive inhibition. Its function is as follows. Catalyzes the ATP-dependent amination of UTP to CTP with either L-glutamine or ammonia as the source of nitrogen. Regulates intracellular CTP levels through interactions with the four ribonucleotide triphosphates. This Paracoccus denitrificans (strain Pd 1222) protein is CTP synthase.